The primary structure comprises 687 residues: Leucine-rich repeat and fibronectin type III domain-containing protein 1-like protein (687 aa).

A signal peptide spans 1–17; sequence MEWLIFSLLLLAVSASG. The LRRNT domain occupies 18–51; it reads QLCPKRCMCQNLSPSLAILCAKTGLLFVPTVIDR. At 18–527 the chain is on the extracellular side; that stretch reads QLCPKRCMCQ…LRSHFLGGTM (510 aa). LRR repeat units follow at residues 52–73, 76–97, 100–121, 124–145, 149–170, 173–194, and 197–218; these read RTVE…DFAN, SLLH…TFAD, RLRA…HFRG, NLRH…AFDD, TLED…TIGR, NVNT…IFSN, and KLAR…PLFL. Asn-73 carries N-linked (GlcNAc...) asparagine glycosylation. The LRRCT domain occupies 241-287; that stretch reads NPLHCNCELLWLRRLTREDDLETCASPPDLTAKYFWTIPEEEFICDP. Positions 287–376 constitute an Ig-like domain; sequence PPVITRKSPK…STGTVELVVS (90 aa). A disulfide bond links Cys-309 and Cys-358. Asn-331, Asn-340, Asn-346, Asn-383, Asn-410, and Asn-450 each carry an N-linked (GlcNAc...) asparagine glycan. Residues 384 to 412 form a disordered region; that stretch reads STNRIREPDPGPSDILTSAKSTSSVSNET. Residues 398 to 412 show a composition bias toward polar residues; it reads ILTSAKSTSSVSNET. The Fibronectin type-III domain occupies 415-510; the sequence is QERKVVLAEL…VGCVTFVTET (96 aa). Residues 528–548 form a helical membrane-spanning segment; that stretch reads IIIIGGIIVASVLVFIIILMI. Topologically, residues 549–687 are cytoplasmic; it reads RYKVYSQHGA…AQRDWSDFKI (139 aa). Disordered stretches follow at residues 563–601 and 630–687; these read GTAM…GSLG and EDIV…DFKI. Composition is skewed to polar residues over residues 565–576 and 657–672; these read AMTNVRSQTNGG and EGTS…SPQV. Positions 673-687 are enriched in basic and acidic residues; the sequence is SDEKKAQRDWSDFKI.

Belongs to the LRFN family.

It localises to the membrane. Its subcellular location is the synapse. In terms of biological role, may be involved in the regulation of excitatory synapses. This is Leucine-rich repeat and fibronectin type III domain-containing protein 1-like protein (lrfn1l) from Danio rerio (Zebrafish).